The chain runs to 654 residues: Pyoverdine export ATP-binding/permease protein PvdT (654 aa).

Residues 6–245 (IELCDIRKAY…QPEQLQANDL (240 aa)) enclose the ABC transporter domain. Residue 43–50 (GASGSGKS) coordinates ATP. The next 4 helical transmembrane spans lie at 282 to 302 (ALTLLGIIIGVASVVVMLAVG), 529 to 549 (LSLMLGAIAAISLLVGGIGVM), 596 to 616 (IVIALLVGGGLLLADIAVAFA), and 617 to 637 (LPAILGAFACAVITGVVFGFM).

The protein belongs to the ABC transporter superfamily. Macrolide exporter (TC 3.A.1.122) family. In terms of assembly, part of the tripartite efflux system PvdRT-OpmQ, which is composed of an inner membrane component with both ATPase and permease domains, PvdT, a periplasmic membrane fusion protein, PvdR, and an outer membrane component, OpmQ.

Its subcellular location is the cell inner membrane. Its function is as follows. Part of the tripartite efflux system PvdRT-OpmQ required for the secretion into the extracellular milieu of the siderophore pyoverdine (PVD), which is involved in iron acquisition. This subunit binds PVD and drives its secretion by hydrolyzing ATP. The system is responsible for export of newly synthesized PVD after the final steps of biosynthesis have taken place in the periplasm. It is also responsible for recycling of PVD after internalization of ferri-PVD into the periplasm by the outer-membrane receptor FpvA and release of iron from PVD, thus making PVD available for new cycles of iron uptake. This chain is Pyoverdine export ATP-binding/permease protein PvdT, found in Pseudomonas entomophila (strain L48).